The primary structure comprises 264 residues: MNWAGLYAILSGVNRHSTSIGRIWLSVVFIFRIMVLVAAAESVWGDEKSAFTCNTQQPGCNSVCYDHFFPISHIRLWALQLIIVSTPALLVAMHVAHLQHQEKKELRLSRHVKDQELAEVKKHKVKISGTLWWTYISSVFFRIIFEAAFMYIFYLIYPGYSMIRLLKCDAYPCPNTVDCFVSRPTEKTIFTVFMLVASGVCIVLNVAEVFFLIAQACTRRARRHRDSGSISKEHQQNEMNLLITGGSIIKRSAGQEKGDHCSTS.

The Cytoplasmic segment spans residues 1 to 22 (MNWAGLYAILSGVNRHSTSIGR). A helical membrane pass occupies residues 23–45 (IWLSVVFIFRIMVLVAAAESVWG). At 46–75 (DEKSAFTCNTQQPGCNSVCYDHFFPISHIR) the chain is on the extracellular side. Residues 76 to 98 (LWALQLIIVSTPALLVAMHVAHL) form a helical membrane-spanning segment. Residues 99-130 (QHQEKKELRLSRHVKDQELAEVKKHKVKISGT) lie on the Cytoplasmic side of the membrane. The helical transmembrane segment at 131-153 (LWWTYISSVFFRIIFEAAFMYIF) threads the bilayer. Over 154–191 (YLIYPGYSMIRLLKCDAYPCPNTVDCFVSRPTEKTIFT) the chain is Extracellular. A helical transmembrane segment spans residues 192-214 (VFMLVASGVCIVLNVAEVFFLIA). At 215–264 (QACTRRARRHRDSGSISKEHQQNEMNLLITGGSIIKRSAGQEKGDHCSTS) the chain is on the cytoplasmic side.

This sequence belongs to the connexin family. Beta-type (group I) subfamily. As to quaternary structure, a connexon is composed of a hexamer of connexins. As to expression, lung, liver, intestines, stomach and kidney.

Its subcellular location is the cell membrane. It localises to the cell junction. The protein resides in the gap junction. In terms of biological role, one gap junction consists of a cluster of closely packed pairs of transmembrane channels, the connexons, through which materials of low MW diffuse from one cell to a neighboring cell. This Xenopus laevis (African clawed frog) protein is Gap junction beta-1 protein (gjb1).